A 226-amino-acid polypeptide reads, in one-letter code: Uracil-DNA glycosylase (226 aa).

The active-site Proton acceptor is the D68.

Belongs to the uracil-DNA glycosylase (UDG) superfamily. UNG family.

It localises to the cytoplasm. It carries out the reaction Hydrolyzes single-stranded DNA or mismatched double-stranded DNA and polynucleotides, releasing free uracil.. Excises uracil residues from the DNA which can arise as a result of misincorporation of dUMP residues by DNA polymerase or due to deamination of cytosine. The polypeptide is Uracil-DNA glycosylase (Mycobacteroides abscessus (strain ATCC 19977 / DSM 44196 / CCUG 20993 / CIP 104536 / JCM 13569 / NCTC 13031 / TMC 1543 / L948) (Mycobacterium abscessus)).